The following is a 252-amino-acid chain: Indole-3-glycerol phosphate synthase (252 aa).

Belongs to the TrpC family.

It carries out the reaction 1-(2-carboxyphenylamino)-1-deoxy-D-ribulose 5-phosphate + H(+) = (1S,2R)-1-C-(indol-3-yl)glycerol 3-phosphate + CO2 + H2O. It functions in the pathway amino-acid biosynthesis; L-tryptophan biosynthesis; L-tryptophan from chorismate: step 4/5. This chain is Indole-3-glycerol phosphate synthase, found in Listeria welshimeri serovar 6b (strain ATCC 35897 / DSM 20650 / CCUG 15529 / CIP 8149 / NCTC 11857 / SLCC 5334 / V8).